The primary structure comprises 564 residues: Major facilitator superfamily transporter MPN_076 (564 aa).

A run of 12 helical transmembrane segments spans residues 1–21, 65–85, 89–109, 176–196, 220–240, 249–269, 306–326, 358–378, 404–424, 425–445, 457–477, and 501–521; these read MLWA…FVID, ITLL…KFGY, VMIM…GDPL, IAGY…GTTL, NLWG…FQSV, VFIL…FAWF, MIGM…GGWW, AGLP…YMVF, IVIV…FAFV, AIAT…ILIL, VSVL…AFDI, and GAIA…AIVV.

It belongs to the major facilitator superfamily.

It localises to the cell membrane. The polypeptide is Major facilitator superfamily transporter MPN_076 (Mycoplasma pneumoniae (strain ATCC 29342 / M129 / Subtype 1) (Mycoplasmoides pneumoniae)).